Reading from the N-terminus, the 81-residue chain is Small ribosomal subunit protein uS17 (81 aa).

Belongs to the universal ribosomal protein uS17 family. As to quaternary structure, part of the 30S ribosomal subunit.

Its function is as follows. One of the primary rRNA binding proteins, it binds specifically to the 5'-end of 16S ribosomal RNA. The protein is Small ribosomal subunit protein uS17 of Methylocella silvestris (strain DSM 15510 / CIP 108128 / LMG 27833 / NCIMB 13906 / BL2).